The primary structure comprises 219 residues: Orotate phosphoribosyltransferase (219 aa).

Lysine 26 serves as a coordination point for 5-phospho-alpha-D-ribose 1-diphosphate. 34–35 (FF) serves as a coordination point for orotate. Residues 72–73 (YK), arginine 98, lysine 99, lysine 102, histidine 104, and 124–132 (DDVITAGTA) each bind 5-phospho-alpha-D-ribose 1-diphosphate. Residues threonine 128 and arginine 156 each coordinate orotate.

It belongs to the purine/pyrimidine phosphoribosyltransferase family. PyrE subfamily. Homodimer. Mg(2+) serves as cofactor.

The enzyme catalyses orotidine 5'-phosphate + diphosphate = orotate + 5-phospho-alpha-D-ribose 1-diphosphate. Its pathway is pyrimidine metabolism; UMP biosynthesis via de novo pathway; UMP from orotate: step 1/2. In terms of biological role, catalyzes the transfer of a ribosyl phosphate group from 5-phosphoribose 1-diphosphate to orotate, leading to the formation of orotidine monophosphate (OMP). This Xanthomonas oryzae pv. oryzae (strain MAFF 311018) protein is Orotate phosphoribosyltransferase.